Here is a 440-residue protein sequence, read N- to C-terminus: Serine/threonine-protein kinase STK11 (440 aa).

Residues 49 to 309 (YLMGDLLGEG…IQQIRQHNWF (261 aa)) enclose the Protein kinase domain. ATP-binding positions include 55 to 63 (LGEGSYGKV) and K78. D176 serves as the catalytic Proton acceptor. Phosphothreonine; by autocatalysis occurs at positions 336 and 365. The disordered stretch occupies residues 370-440 (VPGQVPEEEA…IRKLSTCKQQ (71 aa)). Residues 430–440 (KIRKLSTCKQQ) are compositionally biased toward basic residues. S435 carries the phosphoserine; by PKA modification.

The protein belongs to the protein kinase superfamily. CAMK Ser/Thr protein kinase family. LKB1 subfamily. As to quaternary structure, catalytic component of a trimeric complex composed of STK11/LKB1, STRAD (STRADA or STRADB) and CAB39/MO25 (CAB39/MO25alpha or CAB39L/MO25beta). The cofactor is Mg(2+). Mn(2+) serves as cofactor. As to expression, ubiquitously expressed in all tissues tested. High levels were observed in duodenum and skeletal muscle, lower levels in liver and pancreas.

The protein localises to the nucleus. Its subcellular location is the cytoplasm. It carries out the reaction L-seryl-[protein] + ATP = O-phospho-L-seryl-[protein] + ADP + H(+). The enzyme catalyses L-threonyl-[protein] + ATP = O-phospho-L-threonyl-[protein] + ADP + H(+). In terms of biological role, tumor suppressor serine/threonine-protein kinase that controls the activity of AMP-activated protein kinase (AMPK) family members, thereby playing a role in various processes such as cell metabolism, cell polarity, apoptosis and DNA damage response. Acts by phosphorylating the T-loop of AMPK family proteins, leading to promote their activity. The chain is Serine/threonine-protein kinase STK11 from Gallus gallus (Chicken).